Consider the following 124-residue polypeptide: S-adenosylmethionine decarboxylase proenzyme (124 aa).

S71 acts as the Schiff-base intermediate with substrate; via pyruvic acid in catalysis. The residue at position 71 (S71) is a Pyruvic acid (Ser); by autocatalysis. The active-site Proton acceptor; for processing activity is H76. C91 acts as the Proton donor; for catalytic activity in catalysis.

This sequence belongs to the prokaryotic AdoMetDC family. Type 1 subfamily. Heterotetramer of two alpha and two beta chains arranged as a dimer of alpha/beta heterodimers. Requires pyruvate as cofactor. Post-translationally, is synthesized initially as an inactive proenzyme. Formation of the active enzyme involves a self-maturation process in which the active site pyruvoyl group is generated from an internal serine residue via an autocatalytic post-translational modification. Two non-identical subunits are generated from the proenzyme in this reaction, and the pyruvate is formed at the N-terminus of the alpha chain, which is derived from the carboxyl end of the proenzyme. The post-translation cleavage follows an unusual pathway, termed non-hydrolytic serinolysis, in which the side chain hydroxyl group of the serine supplies its oxygen atom to form the C-terminus of the beta chain, while the remainder of the serine residue undergoes an oxidative deamination to produce ammonia and the pyruvoyl group blocking the N-terminus of the alpha chain.

The enzyme catalyses S-adenosyl-L-methionine + H(+) = S-adenosyl 3-(methylsulfanyl)propylamine + CO2. Its pathway is amine and polyamine biosynthesis; S-adenosylmethioninamine biosynthesis; S-adenosylmethioninamine from S-adenosyl-L-methionine: step 1/1. With respect to regulation, competitively inhibited by methylglyoxal bis-guanylhydrazone. Irreversibly inhibited by NaBH(4) in vitro. Catalyzes the decarboxylation of S-adenosylmethionine to S-adenosylmethioninamine (dcAdoMet), the propylamine donor required for the synthesis of the polyamines spermine and spermidine from the diamine putrescine. Has no arginine decarboxylase (ArgDC) activity. This chain is S-adenosylmethionine decarboxylase proenzyme (speH), found in Saccharolobus solfataricus (strain ATCC 35092 / DSM 1617 / JCM 11322 / P2) (Sulfolobus solfataricus).